A 406-amino-acid chain; its full sequence is Tyrosine--tRNA ligase (406 aa).

Tyr35 lines the L-tyrosine pocket. Positions 40-49 (PTADSLHIGH) match the 'HIGH' region motif. Tyr168 and Gln172 together coordinate L-tyrosine. Positions 228–232 (KMGKT) match the 'KMSKS' region motif. Lys231 lines the ATP pocket. In terms of domain architecture, S4 RNA-binding spans 340–406 (CSVVELLVDI…KKNYNRIIIK (67 aa)).

This sequence belongs to the class-I aminoacyl-tRNA synthetase family. TyrS type 1 subfamily. As to quaternary structure, homodimer.

It is found in the cytoplasm. It catalyses the reaction tRNA(Tyr) + L-tyrosine + ATP = L-tyrosyl-tRNA(Tyr) + AMP + diphosphate + H(+). Functionally, catalyzes the attachment of tyrosine to tRNA(Tyr) in a two-step reaction: tyrosine is first activated by ATP to form Tyr-AMP and then transferred to the acceptor end of tRNA(Tyr). The chain is Tyrosine--tRNA ligase from Clostridium kluyveri (strain NBRC 12016).